The chain runs to 234 residues: MKYGLLQENGKVAEFIQIKTIMKNVIANVSTAITLALMILWIKYPNRIEWEAIIGILLVIKEVTIRWQIGKIESLEFSPAISLAHGYVNNFLEPAINELLMKASNNINFSIYIPHDLEELSDQQIDRMKLQIEANGYRLKEIKLKKKTGRPHDLLLVEKQEGTLSYFDFPRTLLSLQSYIDYKVDSTKNEFSEEKKIAMGAKLVDAFHNEVDRLIKKKNLEGIVTFVSKDLELY.

Residues 20–42 (TIMKNVIANVSTAITLALMILWI) form a helical membrane-spanning segment.

This sequence in the C-terminal section; belongs to the bacterial STING family.

The protein localises to the cell inner membrane. Functionally, effector protein of a CBASS antivirus system. CBASS (cyclic oligonucleotide-based antiphage signaling system) provides immunity against bacteriophage. The CD-NTase protein synthesizes cyclic nucleotides in response to infection; these serve as specific second messenger signals. The signals activate a diverse range of effectors, leading to bacterial cell death and thus abortive phage infection. A type I-D CBASS(GG) system. Binds c-di-GMP (synthesized by the cognate CdnE encoded upstream in the same operon) and about 10-fold less well 3'3'-cGAMP, but not c-di-AMP, 2'3'-cGAMP or cUMP-AMP (tested with a protein without the transmembrane region). The effector protein for this CBASS system, its activity is stimulated by c-di-GMP and leads to cell death. This chain is CD-NTase-associated protein 13, found in Roseivirga ehrenbergii (strain DSM 102268 / JCM 13514 / KCTC 12282 / NCIMB 14502 / KMM 6017).